Consider the following 239-residue polypeptide: Fatty acid metabolism regulator protein (239 aa).

One can recognise an HTH gntR-type domain in the interval 6-74 (QSPAGFAEEY…HGKPTKVNNF (69 aa)). Positions 34-53 (ERELSELIGVTRTTLREVLQ) form a DNA-binding region, H-T-H motif.

Homodimer.

The protein localises to the cytoplasm. Functionally, multifunctional regulator of fatty acid metabolism. The chain is Fatty acid metabolism regulator protein from Yersinia enterocolitica serotype O:8 / biotype 1B (strain NCTC 13174 / 8081).